A 393-amino-acid chain; its full sequence is NAD(P)H-quinone oxidoreductase subunit H, chloroplastic (393 aa).

Belongs to the complex I 49 kDa subunit family. In terms of assembly, NDH is composed of at least 16 different subunits, 5 of which are encoded in the nucleus.

Its subcellular location is the plastid. The protein resides in the chloroplast thylakoid membrane. The catalysed reaction is a plastoquinone + NADH + (n+1) H(+)(in) = a plastoquinol + NAD(+) + n H(+)(out). The enzyme catalyses a plastoquinone + NADPH + (n+1) H(+)(in) = a plastoquinol + NADP(+) + n H(+)(out). NDH shuttles electrons from NAD(P)H:plastoquinone, via FMN and iron-sulfur (Fe-S) centers, to quinones in the photosynthetic chain and possibly in a chloroplast respiratory chain. The immediate electron acceptor for the enzyme in this species is believed to be plastoquinone. Couples the redox reaction to proton translocation, and thus conserves the redox energy in a proton gradient. This Cucumis sativus (Cucumber) protein is NAD(P)H-quinone oxidoreductase subunit H, chloroplastic.